The chain runs to 469 residues: Glutamine synthetase (469 aa).

Residues 14 to 98 form the GS beta-grasp domain; sequence NDVKYVDLRF…VVCDVLEPTT (85 aa). The 364-residue stretch at 106-469 folds into the GS catalytic domain; that stretch reads PRGIAKKAMA…PVEFEMYYSV (364 aa). 2 residues coordinate Mg(2+): glutamate 131 and glutamate 133. Glutamate 209 provides a ligand contact to ATP. The Mg(2+) site is built by glutamate 214 and glutamate 221. Residues 265–266 and glycine 266 contribute to the L-glutamate site; that span reads NG. Residue histidine 270 participates in Mg(2+) binding. Residues 272–274 and serine 274 each bind ATP; that span reads HQS. Residues arginine 322, glutamate 328, and arginine 340 each contribute to the L-glutamate site. The ATP site is built by arginine 340, arginine 345, and lysine 353. Glutamate 358 provides a ligand contact to Mg(2+). Arginine 360 lines the L-glutamate pocket. Residue tyrosine 398 is modified to O-AMP-tyrosine.

Belongs to the glutamine synthetase family. As to quaternary structure, oligomer of 12 subunits arranged in the form of two hexameric ring. It depends on Mg(2+) as a cofactor.

The protein resides in the cytoplasm. The catalysed reaction is L-glutamate + NH4(+) + ATP = L-glutamine + ADP + phosphate + H(+). Its activity is regulated as follows. The activity of this enzyme could be controlled by adenylation under conditions of abundant glutamine. In terms of biological role, catalyzes the ATP-dependent biosynthesis of glutamine from glutamate and ammonia. This Azorhizobium caulinodans (strain ATCC 43989 / DSM 5975 / JCM 20966 / LMG 6465 / NBRC 14845 / NCIMB 13405 / ORS 571) protein is Glutamine synthetase.